The primary structure comprises 707 residues: Golgin candidate 1 (707 aa).

Residues 1 to 664 (MASWLKAAED…RATRFLWRYP (664 aa)) are Cytoplasmic-facing. Disordered stretches follow at residues 22–106 (VVED…EIHP), 121–196 (VADT…SKRD), and 234–256 (QEPK…ADTT). Positions 38 to 47 (SGRKGSQGKR) are enriched in low complexity. A compositionally biased stretch (basic and acidic residues) spans 56-67 (VKEESSNKRDSS). Polar residues predominate over residues 68-80 (GDQSGPGVSQSEV). Low complexity predominate over residues 83 to 95 (SKSSVSTDETSSS). 3 stretches are compositionally biased toward basic and acidic residues: residues 139–150 (DGDRSESKHADG), 185–196 (TQRELDDSSKRD), and 245–254 (LKREQDRRAD). Coiled-coil stretches lie at residues 287–424 (RVCA…NATK) and 452–608 (ADER…KSRV). A helical; Signal-anchor for type II membrane protein transmembrane segment spans residues 665 to 685 (IARMFLLFYLVFVHLFLMYLI). Residues 686–707 (HRLQEQAEAQEVAAMTNNVFRL) are Lumenal-facing.

Its subcellular location is the golgi apparatus membrane. Golgi matrix protein playing a role in tethering of vesicles to Golgi membranes and in maintaining the overall structure of the Golgi apparatus. This chain is Golgin candidate 1 (GC1), found in Arabidopsis thaliana (Mouse-ear cress).